We begin with the raw amino-acid sequence, 268 residues long: Shikimate dehydrogenase (NADP(+)) (268 aa).

Shikimate-binding positions include 15–17 (SKS) and Thr-60. Lys-64 functions as the Proton acceptor in the catalytic mechanism. Residues Asn-85 and Asp-101 each contribute to the shikimate site. Residues 121 to 125 (GAGGS) and Leu-208 each bind NADP(+). Tyr-210 serves as a coordination point for shikimate. Gly-230 lines the NADP(+) pocket.

This sequence belongs to the shikimate dehydrogenase family. As to quaternary structure, homodimer.

The catalysed reaction is shikimate + NADP(+) = 3-dehydroshikimate + NADPH + H(+). It functions in the pathway metabolic intermediate biosynthesis; chorismate biosynthesis; chorismate from D-erythrose 4-phosphate and phosphoenolpyruvate: step 4/7. Involved in the biosynthesis of the chorismate, which leads to the biosynthesis of aromatic amino acids. Catalyzes the reversible NADPH linked reduction of 3-dehydroshikimate (DHSA) to yield shikimate (SA). This is Shikimate dehydrogenase (NADP(+)) from Helicobacter hepaticus (strain ATCC 51449 / 3B1).